Consider the following 585-residue polypeptide: MAAPMDRTHGGRAARALRRALALASLAGLLLSGLAGALPTLGPGWRRQNPEPPASRTRSLLLDAASGQLRLEYGFHPDAVAWANLTNAIRETGWAYLDLGTNGSYNDSLQAYAAGVVEASVSEELIYMHWMNTVVNYCGPFEYEVGYCEKLKSFLEANLEWMQREMELSPDSPYWHQVRLTLLQLKGLEDSYEGRLTFPTGRFNIKPLGFLLLQISGDLEDLEPALNKTNTKPSVGSGSCSALIKLLPGSHDLLVAHNTWNSYQNMLRIIKKYRLQFREGPQEEYPLIAGNNLIFSSYPGTIFSGDDFYILGSGLVTLETTIGNKNPALWKYVQPQGCVLEWIRNIVANRLALDGATWADVFRRFNSGTYNNQWMIVDYKAFIPNGPSPGSRVLTILEQIPGMVVVADKTAELYKTTYWASYNIPYFESVFNASGLQALVAQYGDWFSYTRNPRAKIFQRDQSLVEDVDTMVRLMRYNDFLHDPLSLCEACSPKPNAENAISARSDLNPANGSYPFQALRQRAHGGIDVKVTSVALAKYMSMLAASGPTWDQLPPFQWSKSPFHNMLHMGQPDLWMFSPVKVPWD.

The N-terminal stretch at Met-1 to Ala-35 is a signal peptide. N-linked (GlcNAc...) asparagine glycans are attached at residues Asn-84, Asn-102, and Asn-106. A disulfide bridge links Cys-138 with Cys-148. Residues Asn-227 and Asn-432 are each glycosylated (N-linked (GlcNAc...) asparagine). Cysteines 488 and 491 form a disulfide. N-linked (GlcNAc...) asparagine glycosylation is present at Asn-511.

The protein belongs to the phospholipase B-like family. Interacts with IGF2R. Glycosylated; contains mannose 6-phosphate sugars.

Its subcellular location is the lysosome lumen. Its function is as follows. Putative phospholipase. The sequence is that of Putative phospholipase B-like 2 (Plbd2) from Rattus norvegicus (Rat).